The following is a 255-amino-acid chain: Putative mediator of RNA polymerase II transcription subunit 30 (255 aa).

The span at 58-107 shows a compositional bias: low complexity; it reads QSQQLQQPQSIPSSTNNSTNTNTNNSTTTTTTSSTSSTTTPTTTTSTTSP. Disordered stretches follow at residues 58-133 and 177-207; these read QSQQ…TLNL and NIDNDDTIMKDDNNNSSTSAPTTTTINIEKQ. Positions 108-133 are enriched in polar residues; that stretch reads LNSKDSTATTTTKEQPSSPTLPTLNL. A compositionally biased stretch (basic and acidic residues) spans 177–189; sequence NIDNDDTIMKDDN. Positions 190–201 are enriched in low complexity; sequence NNSSTSAPTTTT.

Belongs to the Mediator complex subunit 30 family. Highly divergent. As to quaternary structure, component of the Mediator complex.

The protein localises to the nucleus. Functionally, component of the Mediator complex, a coactivator involved in the regulated transcription of nearly all RNA polymerase II-dependent genes. Mediator functions as a bridge to convey information from gene-specific regulatory proteins to the basal RNA polymerase II transcription machinery. Mediator is recruited to promoters by direct interactions with regulatory proteins and serves as a scaffold for the assembly of a functional preinitiation complex with RNA polymerase II and the general transcription factors. This Dictyostelium discoideum (Social amoeba) protein is Putative mediator of RNA polymerase II transcription subunit 30 (med30).